We begin with the raw amino-acid sequence, 440 residues long: Trigger factor (440 aa).

One can recognise a PPIase FKBP-type domain in the interval Gly163–Pro248.

The protein belongs to the FKBP-type PPIase family. Tig subfamily.

The protein resides in the cytoplasm. It carries out the reaction [protein]-peptidylproline (omega=180) = [protein]-peptidylproline (omega=0). In terms of biological role, involved in protein export. Acts as a chaperone by maintaining the newly synthesized protein in an open conformation. Functions as a peptidyl-prolyl cis-trans isomerase. This Lactiplantibacillus plantarum (strain ATCC BAA-793 / NCIMB 8826 / WCFS1) (Lactobacillus plantarum) protein is Trigger factor.